Consider the following 207-residue polypeptide: uncharacterized protein (207 aa).

This sequence to M.leprae ML1660.

This is an uncharacterized protein from Mycobacterium tuberculosis (strain CDC 1551 / Oshkosh).